The chain runs to 67 residues: Large ribosomal subunit protein bL35 (67 aa).

Belongs to the bacterial ribosomal protein bL35 family.

The polypeptide is Large ribosomal subunit protein bL35 (Sphingopyxis alaskensis (strain DSM 13593 / LMG 18877 / RB2256) (Sphingomonas alaskensis)).